Here is an 84-residue protein sequence, read N- to C-terminus: Large ribosomal subunit protein bL28 (84 aa).

It belongs to the bacterial ribosomal protein bL28 family.

In Clostridium perfringens (strain 13 / Type A), this protein is Large ribosomal subunit protein bL28.